The primary structure comprises 504 residues: Maturase K (504 aa).

This sequence belongs to the intron maturase 2 family. MatK subfamily.

It localises to the plastid. Its subcellular location is the chloroplast. In terms of biological role, usually encoded in the trnK tRNA gene intron. Probably assists in splicing its own and other chloroplast group II introns. The sequence is that of Maturase K from Cynophalla hastata (Broadleaf caper).